A 449-amino-acid polypeptide reads, in one-letter code: Zinc finger and BTB domain-containing protein 14 (449 aa).

The BTB domain maps to 36-102 (CDIAIVVEDV…MYTAKISVKK (67 aa)). Lys-46 participates in a covalent cross-link: Glycyl lysine isopeptide (Lys-Gly) (interchain with G-Cter in SUMO2). The Nuclear localization signal motif lies at 50 to 66 (HRCVLAACSTYFKKLFK). Residues 156–194 (ADAQDDDVEEIGDQDDSPSDDTVEGTPPSQEDGKSPTTT) form a disordered region. The segment covering 157-178 (DAQDDDVEEIGDQDDSPSDDTV) has biased composition (acidic residues). Residues Lys-203 and Lys-249 each participate in a glycyl lysine isopeptide (Lys-Gly) (interchain with G-Cter in SUMO2) cross-link. 5 C2H2-type zinc fingers span residues 277-304 (IACQ…ADRP), 305-332 (FVCE…GYKP), 333-360 (YSCE…NERP), 361-388 (FACH…GEKP), and 389-417 (FVCG…ERKQ). A compositionally biased stretch (basic and acidic residues) spans 405 to 417 (KRHENNMHSERKQ). A disordered region spans residues 405 to 424 (KRHENNMHSERKQVTPSAIQ).

The protein belongs to the krueppel C2H2-type zinc-finger protein family. As to quaternary structure, interacts with ZBTB21. As to expression, ubiquitous.

The protein localises to the nucleus. Functionally, transcriptional activator of the dopamine transporter (DAT), binding it's promoter at the consensus sequence 5'-CCTGCACAGTTCACGGA-3'. Binds to 5'-d(GCC)(n)-3' trinucleotide repeats in promoter regions and acts as a repressor of the FMR1 gene. Transcriptional repressor of MYC and thymidine kinase promoters. This Mus musculus (Mouse) protein is Zinc finger and BTB domain-containing protein 14 (Zbtb14).